The primary structure comprises 151 residues: ATP synthase subunit b' (151 aa).

Residues 18-38 form a helical membrane-spanning segment; it reads TLPLMALQVVLLTFILNALFF.

It belongs to the ATPase B chain family. As to quaternary structure, F-type ATPases have 2 components, F(1) - the catalytic core - and F(0) - the membrane proton channel. F(1) has five subunits: alpha(3), beta(3), gamma(1), delta(1), epsilon(1). F(0) has four main subunits: a(1), b(1), b'(1) and c(10-14). The alpha and beta chains form an alternating ring which encloses part of the gamma chain. F(1) is attached to F(0) by a central stalk formed by the gamma and epsilon chains, while a peripheral stalk is formed by the delta, b and b' chains.

It localises to the cellular thylakoid membrane. F(1)F(0) ATP synthase produces ATP from ADP in the presence of a proton or sodium gradient. F-type ATPases consist of two structural domains, F(1) containing the extramembraneous catalytic core and F(0) containing the membrane proton channel, linked together by a central stalk and a peripheral stalk. During catalysis, ATP synthesis in the catalytic domain of F(1) is coupled via a rotary mechanism of the central stalk subunits to proton translocation. Functionally, component of the F(0) channel, it forms part of the peripheral stalk, linking F(1) to F(0). The b'-subunit is a diverged and duplicated form of b found in plants and photosynthetic bacteria. In Prochlorococcus marinus (strain MIT 9303), this protein is ATP synthase subunit b'.